A 116-amino-acid chain; its full sequence is Outer membrane protein assembly factor BamE (116 aa).

The N-terminal stretch at M1 to G22 is a signal peptide. C23 carries N-palmitoyl cysteine lipidation. C23 carries the S-diacylglycerol cysteine lipid modification.

It belongs to the BamE family. As to quaternary structure, part of the Bam complex, which is composed of the outer membrane protein BamA, and four lipoproteins BamB, BamC, BamD and BamE.

It is found in the cell outer membrane. In terms of biological role, part of the outer membrane protein assembly complex, which is involved in assembly and insertion of beta-barrel proteins into the outer membrane. The chain is Outer membrane protein assembly factor BamE from Yersinia pestis.